Consider the following 902-residue polypeptide: Glycogen phosphorylase (902 aa).

The interval 1–21 (MPPASTSTTNDMITEEPTSPH) is disordered. Thr-31 is modified (phosphothreonine). Ser-333 carries the phosphoserine modification. Position 751 is an N6-(pyridoxal phosphate)lysine (Lys-751).

The protein belongs to the glycogen phosphorylase family. As to quaternary structure, homodimer. Pyridoxal 5'-phosphate is required as a cofactor.

It localises to the cytoplasm. The protein localises to the cytosol. It carries out the reaction [(1-&gt;4)-alpha-D-glucosyl](n) + phosphate = [(1-&gt;4)-alpha-D-glucosyl](n-1) + alpha-D-glucose 1-phosphate. Its activity is regulated as follows. Activated by phosphorylation of Thr-31. Functionally, phosphorylase is an important allosteric enzyme in carbohydrate metabolism. Enzymes from different sources differ in their regulatory mechanisms and in their natural substrates. However, all known phosphorylases share catalytic and structural properties. The polypeptide is Glycogen phosphorylase (GPH1) (Saccharomyces cerevisiae (strain ATCC 204508 / S288c) (Baker's yeast)).